The following is a 143-amino-acid chain: Ribosomal RNA large subunit methyltransferase H (143 aa).

The S-adenosyl-L-methionine site is built by L68 and G95.

The protein belongs to the RNA methyltransferase RlmH family. As to quaternary structure, homodimer.

Its subcellular location is the cytoplasm. The catalysed reaction is pseudouridine(1915) in 23S rRNA + S-adenosyl-L-methionine = N(3)-methylpseudouridine(1915) in 23S rRNA + S-adenosyl-L-homocysteine + H(+). Specifically methylates the pseudouridine at position 1915 (m3Psi1915) in 23S rRNA. This is Ribosomal RNA large subunit methyltransferase H from Mycoplasma mobile (strain ATCC 43663 / 163K / NCTC 11711) (Mesomycoplasma mobile).